Reading from the N-terminus, the 852-residue chain is Alanine--tRNA ligase (852 aa).

Positions 554, 558, 656, and 660 each coordinate Zn(2+).

It belongs to the class-II aminoacyl-tRNA synthetase family. Zn(2+) serves as cofactor.

The protein resides in the cytoplasm. It carries out the reaction tRNA(Ala) + L-alanine + ATP = L-alanyl-tRNA(Ala) + AMP + diphosphate. In terms of biological role, catalyzes the attachment of alanine to tRNA(Ala) in a two-step reaction: alanine is first activated by ATP to form Ala-AMP and then transferred to the acceptor end of tRNA(Ala). Also edits incorrectly charged Ser-tRNA(Ala) and Gly-tRNA(Ala) via its editing domain. In Campylobacter curvus (strain 525.92), this protein is Alanine--tRNA ligase.